We begin with the raw amino-acid sequence, 240 residues long: Probable septum site-determining protein MinC (240 aa).

It belongs to the MinC family. Interacts with MinD and FtsZ.

Cell division inhibitor that blocks the formation of polar Z ring septums. Rapidly oscillates between the poles of the cell to destabilize FtsZ filaments that have formed before they mature into polar Z rings. Prevents FtsZ polymerization. In Chromobacterium violaceum (strain ATCC 12472 / DSM 30191 / JCM 1249 / CCUG 213 / NBRC 12614 / NCIMB 9131 / NCTC 9757 / MK), this protein is Probable septum site-determining protein MinC.